The sequence spans 294 residues: MSQLGSAVPSSNLPEGLPVSSLALLILVLIPCVLLLLLLNCLFVGYKLFRMTRRKRDRYGSEMSLMHSSYSTRQRITRFSDEPPVAPNRKTNYVSVSEPMLAPPITSSLTSSAERRATGQRAMFLRPDGATYAGSESLRVPHWRTSAPVLVQSSDSDMERVNTVPPNSPVLRVTPNGFSVPMTSLRRSSTMELESTSLDKIHVECESASIIPQENSCYVVSSSSSARGSGLDSDFGASAGVSLRILSMDSDGFPGSAWASALEWDYYDPSYVTQNHVPKHRPQAPPITTKQYWV.

Residues 1–23 (MSQLGSAVPSSNLPEGLPVSSLA) lie on the Extracellular side of the membrane. A helical membrane pass occupies residues 24-44 (LLILVLIPCVLLLLLLNCLFV). The Cytoplasmic portion of the chain corresponds to 45–294 (GYKLFRMTRR…PPITTKQYWV (250 aa)). The tract at residues 154–175 (SDSDMERVNTVPPNSPVLRVTP) is disordered. Residues 164-169 (VPPNSP) carry the VPPNSP motif motif. Positions 184-190 (SLRRSST) match the SLRRSST motif motif.

The protein belongs to the huluwa family. Interacts with axin1; leading to promote the tankyrase-mediated degradation of axin. Interacts with axin2; leading to promote the tankyrase-mediated degradation of axin.

It localises to the cell membrane. In terms of biological role, key maternal determinant of the dorsal organizer and body axis formation in vertebrates that acts by promoting stabilization of beta-catenin (ctnnb1). Localizes on the plasma membrane of the future dorsal blastomeres in early blastulas and binds to and promotes the tankyrase-mediated degradation of axin (axin1 and axin2). Axin degradation results in stabilization and nuclear translocation of beta-catenin (ctnnb1) for activating organizer-specific target gene expression. This chain is Protein huluwa, found in Danio rerio (Zebrafish).